Reading from the N-terminus, the 118-residue chain is Protein RALF-like 24 (118 aa).

An N-terminal signal peptide occupies residues 1 to 22 (MSRSLALVYLSLLCLQTHLSIS). A propeptide spans 23-63 (VTVPIPSVNGEIDAMLNRNGVIGEEEGEEMMPSEISRRVMM) (removed in mature form). 2 cysteine pairs are disulfide-bonded: cysteine 81-cysteine 91 and cysteine 103-cysteine 109.

The protein belongs to the plant rapid alkalinization factor (RALF) family. Proteolytically cleaved, probably by S1P, a subtilisin-like serine protease (subtilase).

The protein localises to the secreted. Cell signaling peptide that may regulate plant stress, growth, and development. Mediates a rapid alkalinization of extracellular space by mediating a transient increase in the cytoplasmic Ca(2+) concentration leading to a calcium-dependent signaling events through a cell surface receptor and a concomitant activation of some intracellular mitogen-activated protein kinases. This chain is Protein RALF-like 24 (RALFL24), found in Arabidopsis thaliana (Mouse-ear cress).